A 321-amino-acid polypeptide reads, in one-letter code: Cyclic AMP-AMP-AMP synthase (321 aa).

Lys-63 contributes to the ATP binding site. Positions 72 and 74 each coordinate Mg(2+). ATP is bound by residues Asp-74, His-162, Lys-185, 201-203 (KSF), and Asn-270.

The protein belongs to the CD-NTase family. A01 subfamily. Forms complexes with Cap7 with 1:1 and 2:2 stoichimetry, and a 1:1:6 CdnC:Cap7:Cap6 complex. The cofactor is Mg(2+).

The catalysed reaction is 3 ATP = 3',3',3'-c-tri-AMP + 3 diphosphate. It carries out the reaction 2 ATP = 3',3'-c-di-AMP + 2 diphosphate. The 2:2 CdnC:Cap7 (Cap7 is also called HORMA) complex is activated for cAAA synthesis by long dsDNA, but not 40 bp dsDNA or ssDNA; the 1:1 complex is inactive in vitro. The 2:2:DNA complex is catalytically disassembled and inactivated by Cap6 (also called Trip13). Its function is as follows. Cyclic nucleotide synthase (second messenger synthase) of a CBASS antivirus system. CBASS (cyclic oligonucleotide-based antiphage signaling system) provides immunity against bacteriophage. The CD-NTase protein synthesizes cyclic nucleotides in response to infection; these serve as specific second messenger signals. The signals activate a diverse range of effectors, leading to bacterial cell death and thus abortive phage infection. A type III-C(AAA) CBASS system. In terms of biological role, cyclic nucleotide synthase that upon activation catalyzes the synthesis of 3',3',3'-cyclic AMP-AMP-AMP (3',3',3'-c-tri-AMP or cAAA) as the major product, and 3',3'-c-di-AMP as a minor product. Cannot use GTP as a substrate. Functionally, protects E.coli strain JP313 against bacteriophage lambda cI- infection. When the cdnC-cap7-cap6-nucC operon is transformed into a susceptible strain it confers bacteriophage immunity. Mutations in the sensor (Cap7 also called HORMA) or effector proteins (CdnC, NucC) but not the disassembly protein (Cap6 also called Trip13) no longer confer immunity. The presence of the intact operon leads to culture collapse and cell death, which occurs before the phage has finished its replication cycle, thus protecting non-infected bacteria by aborting the phage infection and preventing its propagation. The protein is Cyclic AMP-AMP-AMP synthase of Escherichia coli (strain MS 115-1).